The following is a 475-amino-acid chain: MPASRTVRLIRLGCARNDVDAEELAARLVDAGWRLTEAPSADVTVVNTCGFIEAAKQESIDTLLEAADGSTRVVAVGCLAERYGAALADAMPEATILSFDDYPVIAQRLEDVLAGRPPAPHTPRDRRTLLPLTPVDRPRAAAEVGIPGHLGGPRVLRHRLDDSPVAPLKIASGCDRRCTFCAIPSFRGAFVSRPPADILREAQWLADHGAREIVLVSENSTSYGKDLGDPFALEKLLAAFGGVDGLVRVRVTYLQPAEVRPALIDVIATAPHVAPYFDLSFQHASPRVLRRMRRFGGSEEFLNLLAEIRRRNPRAAVRSNVIVGFPGETEEDVAELGEFLRAARLDGIGVFGYSDEDGTEASGFPEKIPEQEIRSRVDDIAGIAEEVTADRARARLGETVDVLIDGVDDDRPDACYGYTEVQAVDVDGVTVLRDCSAARGALVRAEIVEIDGVDFLAAPVTGSTAGTPSGATVEG.

One can recognise an MTTase N-terminal domain in the interval 5 to 114 (RTVRLIRLGC…IAQRLEDVLA (110 aa)). Cys14, Cys49, Cys78, Cys174, Cys178, and Cys181 together coordinate [4Fe-4S] cluster. A Radical SAM core domain is found at 160–390 (LDDSPVAPLK…AGIAEEVTAD (231 aa)). One can recognise a TRAM domain in the interval 393–461 (RARLGETVDV…GVDFLAAPVT (69 aa)).

Belongs to the methylthiotransferase family. RimO subfamily. [4Fe-4S] cluster serves as cofactor.

It localises to the cytoplasm. The enzyme catalyses L-aspartate(89)-[ribosomal protein uS12]-hydrogen + (sulfur carrier)-SH + AH2 + 2 S-adenosyl-L-methionine = 3-methylsulfanyl-L-aspartate(89)-[ribosomal protein uS12]-hydrogen + (sulfur carrier)-H + 5'-deoxyadenosine + L-methionine + A + S-adenosyl-L-homocysteine + 2 H(+). Catalyzes the methylthiolation of an aspartic acid residue of ribosomal protein uS12. The protein is Ribosomal protein uS12 methylthiotransferase RimO of Acidothermus cellulolyticus (strain ATCC 43068 / DSM 8971 / 11B).